The following is a 223-amino-acid chain: Endonuclease V (223 aa).

2 residues coordinate Mg(2+): aspartate 45 and aspartate 113.

Belongs to the endonuclease V family. The cofactor is Mg(2+).

It is found in the cytoplasm. It carries out the reaction Endonucleolytic cleavage at apurinic or apyrimidinic sites to products with a 5'-phosphate.. Functionally, DNA repair enzyme involved in the repair of deaminated bases. Selectively cleaves double-stranded DNA at the second phosphodiester bond 3' to a deoxyinosine leaving behind the intact lesion on the nicked DNA. This chain is Endonuclease V, found in Dehalococcoides mccartyi (strain ATCC BAA-2100 / JCM 16839 / KCTC 5957 / BAV1).